The chain runs to 148 residues: uncharacterized protein (148 aa).

This is an uncharacterized protein from Methanocaldococcus jannaschii (strain ATCC 43067 / DSM 2661 / JAL-1 / JCM 10045 / NBRC 100440) (Methanococcus jannaschii).